The following is an 842-amino-acid chain: Taste receptor type 1 member 1 (842 aa).

Residues 1–19 (MLFWAAHLLLSLQLAVAYC) form the signal peptide. Residues 20–568 (WAFSCQRTES…EFLGWHEPIS (549 aa)) lie on the Extracellular side of the membrane. N-linked (GlcNAc...) asparagine glycosylation is found at asparagine 88, asparagine 89, asparagine 96, asparagine 136, asparagine 292, asparagine 480, and asparagine 530. The helical transmembrane segment at 569–589 (LVLLAANTLLLLLLIGTAGLF) threads the bilayer. Over 590–604 (AWRLHTPVVRSAGGR) the chain is Cytoplasmic. Residues 605–625 (LCFLMLGSLVAGSCSLYSFFG) form a helical membrane-spanning segment. The Extracellular portion of the chain corresponds to 626–640 (KPTVPACLLRQPLFS). Residues 641–661 (LGFAIFLSCLTIRSFQLVIIF) form a helical membrane-spanning segment. Residues 662 to 681 (KFSTKVPTFYHTWAQNHGAG) lie on the Cytoplasmic side of the membrane. The helical transmembrane segment at 682 to 702 (IFVIVSSTVHLFLCLTWLAMW) threads the bilayer. Topologically, residues 703–725 (TPRPTREYQRFPHLVILECTEVN) are extracellular. A helical membrane pass occupies residues 726 to 746 (SVGFLVAFAHNILLSISTFVC). At 747-762 (SYLGKELPENYNEAKC) the chain is on the cytoplasmic side. Residues 763-783 (VTFSLLLHFVSWIAFFTMSSI) traverse the membrane as a helical segment. Residues 784-789 (YQGSYL) are Extracellular-facing. A helical transmembrane segment spans residues 790-810 (PAVNVLAGLATLSGGFSGYFL). Over 811-842 (PKCYVILCRPELNNTEHFQASIQDYTRRCGTT) the chain is Cytoplasmic.

It belongs to the G-protein coupled receptor 3 family. TAS1R subfamily. In terms of assembly, forms heterodimers with TAS1R3. In terms of tissue distribution, expressed strongly only in fungiform papillae.

The protein resides in the cell membrane. Its function is as follows. Putative taste receptor. TAS1R1/TAS1R3 responds to the umami taste stimulus (the taste of monosodium glutamate) and also to most of the 20 standard L-amino acids, but not to their D-enantiomers or other compounds. Sequence differences within and between species can significantly influence the selectivity and specificity of taste responses. The protein is Taste receptor type 1 member 1 (Tas1r1) of Mus musculus (Mouse).